A 496-amino-acid polypeptide reads, in one-letter code: uncharacterized protein (496 aa).

Positions 118–129 (LDRPFIKPRREN) are enriched in basic and acidic residues. The disordered stretch occupies residues 118–187 (LDRPFIKPRR…NPHQSNRNTS (70 aa)). Polar residues predominate over residues 151–187 (TSDSQYASPFENHSITNLPIGQKQPFNNPHQSNRNTS).

This is an uncharacterized protein from Acanthamoeba polyphaga mimivirus (APMV).